Consider the following 138-residue polypeptide: Putative pre-16S rRNA nuclease (138 aa).

This sequence belongs to the YqgF nuclease family.

It localises to the cytoplasm. Functionally, could be a nuclease involved in processing of the 5'-end of pre-16S rRNA. The sequence is that of Putative pre-16S rRNA nuclease from Enterobacter sp. (strain 638).